Reading from the N-terminus, the 358-residue chain is MTTTIRSGRLSSWESFCNWVTSTNNRIYVGWFGVLMVPTLLAAAICFTIAFIAAPPVDIDGIREPVAGSFLYGNNIISGAVVPSSNAIGLHFYPIWEAASVDEWLYNGGPYQLVVFHFLIGICCWLGRQWELSYRLGMRPWICVAYSAPLSAAFAVFLIYPVGQGSFSDGMPLGISGTFNFMLVFQAEHNILMHPFHMIGVAGMFGGSLFSAMHGSLVTSSLIRETTETESQNYGYKFGQEEETYNIVAAHGYFGRLIFQYASFNNSRSLHFFLAAWPVICIWITSLGISTMAFNLNGFNFNQSVLDAQGRVVPTWADVLNRSNLGMEVMHERNAHNFPLDLAAAESTPVALIAPAIG.

The next 3 membrane-spanning stretches (helical) occupy residues 28–45 (YVGWFGVLMVPTLLAAAI), 117–132 (HFLIGICCWLGRQWEL), and 141–155 (WICVAYSAPLSAAFA). Residue His-117 participates in chlorophyll a binding. Trp-125 is a binding site for pheophytin a. 2 residues coordinate [CaMn4O5] cluster: Asp-169 and Glu-188. Residues 196 to 217 (FHMIGVAGMFGGSLFSAMHGSL) traverse the membrane as a helical segment. His-197 contacts chlorophyll a. A quinone-binding positions include His-214 and 263–264 (SF). His-214 is a Fe cation binding site. Residue His-271 coordinates Fe cation. Residues 273-287 (FLAAWPVICIWITSL) traverse the membrane as a helical segment. [CaMn4O5] cluster-binding residues include His-331, Glu-332, Asp-341, and Ala-343. The propeptide occupies 344-358 (AAESTPVALIAPAIG).

Belongs to the reaction center PufL/M/PsbA/D family. In terms of assembly, PSII is composed of 1 copy each of membrane proteins PsbA, PsbB, PsbC, PsbD, PsbE, PsbF, PsbH, PsbI, PsbJ, PsbK, PsbL, PsbM, PsbT, PsbX, PsbY, Psb30/Ycf12, peripheral proteins PsbO, CyanoQ (PsbQ), PsbU, PsbV and a large number of cofactors. It forms dimeric complexes. The D1/D2 heterodimer binds P680, chlorophylls that are the primary electron donor of PSII, and subsequent electron acceptors. It shares a non-heme iron and each subunit binds pheophytin, quinone, additional chlorophylls, carotenoids and lipids. D1 provides most of the ligands for the Mn4-Ca-O5 cluster of the oxygen-evolving complex (OEC). There is also a Cl(-1) ion associated with D1 and D2, which is required for oxygen evolution. The PSII complex binds additional chlorophylls, carotenoids and specific lipids. serves as cofactor. In terms of processing, tyr-160 forms a radical intermediate that is referred to as redox-active TyrZ, YZ or Y-Z. C-terminally processed by CtpA; processing is essential to allow assembly of the oxygen-evolving complex and thus photosynthetic growth.

The protein localises to the cellular thylakoid membrane. The enzyme catalyses 2 a plastoquinone + 4 hnu + 2 H2O = 2 a plastoquinol + O2. Photosystem II (PSII) is a light-driven water:plastoquinone oxidoreductase that uses light energy to abstract electrons from H(2)O, generating O(2) and a proton gradient subsequently used for ATP formation. It consists of a core antenna complex that captures photons, and an electron transfer chain that converts photonic excitation into a charge separation. The D1/D2 (PsbA/PsbD) reaction center heterodimer binds P680, the primary electron donor of PSII as well as several subsequent electron acceptors. In Prochlorococcus marinus (strain MIT 9303), this protein is Photosystem II protein D1.